A 553-amino-acid polypeptide reads, in one-letter code: Protein Early 65 kDa (553 aa).

The protein localises to the host cytoplasm. In terms of biological role, may participate in the recruitment of G-actin to the host nucleus. This chain is Protein Early 65 kDa (HE65), found in Autographa californica nuclear polyhedrosis virus (AcMNPV).